The chain runs to 228 residues: PKHD-type hydroxylase Vapar_1809 (228 aa).

The Fe2OG dioxygenase domain maps to 78 to 179 (QISPPLFNRY…RTASYFWIQS (102 aa)). Fe cation contacts are provided by H97, D99, and H160. R170 contributes to the 2-oxoglutarate binding site.

Fe(2+) is required as a cofactor. It depends on L-ascorbate as a cofactor.

The polypeptide is PKHD-type hydroxylase Vapar_1809 (Variovorax paradoxus (strain S110)).